The sequence spans 585 residues: UvrABC system protein C (585 aa).

Positions Ala-15 to Val-90 constitute a GIY-YIG domain. Positions Gly-198 to Phe-233 constitute a UVR domain.

It belongs to the UvrC family. In terms of assembly, interacts with UvrB in an incision complex.

The protein localises to the cytoplasm. In terms of biological role, the UvrABC repair system catalyzes the recognition and processing of DNA lesions. UvrC both incises the 5' and 3' sides of the lesion. The N-terminal half is responsible for the 3' incision and the C-terminal half is responsible for the 5' incision. This chain is UvrABC system protein C, found in Haloquadratum walsbyi (strain DSM 16790 / HBSQ001).